We begin with the raw amino-acid sequence, 870 residues long: Aldehyde-alcohol dehydrogenase 2 (870 aa).

Residue Cys252 is part of the active site. NAD(+) is bound at residue 431-436 (GCGSYG).

It in the N-terminal section; belongs to the aldehyde dehydrogenase family. This sequence in the C-terminal section; belongs to the iron-containing alcohol dehydrogenase family. Seems to form a rod shaped homomer composed of at least 20 identical subunits. Zn(2+) serves as cofactor. Fe(2+) is required as a cofactor.

It catalyses the reaction a primary alcohol + NAD(+) = an aldehyde + NADH + H(+). The enzyme catalyses a secondary alcohol + NAD(+) = a ketone + NADH + H(+). The catalysed reaction is acetaldehyde + NAD(+) + CoA = acetyl-CoA + NADH + H(+). In terms of biological role, this enzyme has two NAD(+)-dependent activities: ADH and ACDH. May be a critical enzyme in the fermentative pathway. The protein is Aldehyde-alcohol dehydrogenase 2 (ADH2) of Entamoeba histolytica (strain ATCC 30459 / HM-1:IMSS / ABRM).